Consider the following 242-residue polypeptide: RNA polymerase sigma factor for flagellar operon (242 aa).

Residues aspartate 55 to glycine 68 carry the Polymerase core binding motif. The segment at residues leucine 211–lysine 230 is a DNA-binding region (H-T-H motif).

It belongs to the sigma-70 factor family.

Functionally, sigma factors are initiation factors that promote the attachment of RNA polymerase to specific initiation sites and are then released. This alternative sigma factor is specific for the flagellin gene (fliC) expression. The sequence is that of RNA polymerase sigma factor for flagellar operon (lafS) from Vibrio parahaemolyticus serotype O3:K6 (strain RIMD 2210633).